The chain runs to 317 residues: MAIVRHKQPPLRRFMMYWVDHARQAFSSLGELWRNPLASLMTLAVLGVSLALPSCFHVLLKNAEVVEGSWQTSSQISLYLRKDLPEQSILDMKQRILLYPEVESVTYMSRDEALKEFREISGFGDALDYLDSNPLPPVLSVIPDPRWQNPEGAAELLNKLNNEDGVEQGKLDLQWLTRLQGIMNLLRHTITGIAVLLLSAVLLIVGNTLRLNILNQRSEIEVLKLVGATDAFIHRPFLYTGIWFGVIGGMLAWWLTEVMVIWSEGVVNELAGLYNSNFRLVGMGAVDGINLILLGALLGLIASWFSVHRHIRDIEPS.

Residues 1-39 lie on the Cytoplasmic side of the membrane; the sequence is MAIVRHKQPPLRRFMMYWVDHARQAFSSLGELWRNPLAS. Residues 40-60 traverse the membrane as a helical segment; the sequence is LMTLAVLGVSLALPSCFHVLL. At 61–188 the chain is on the periplasmic side; the sequence is KNAEVVEGSW…LQGIMNLLRH (128 aa). The chain crosses the membrane as a helical span at residues 189 to 209; sequence TITGIAVLLLSAVLLIVGNTL. At 210-241 the chain is on the cytoplasmic side; the sequence is RLNILNQRSEIEVLKLVGATDAFIHRPFLYTG. The chain crosses the membrane as a helical span at residues 242–262; it reads IWFGVIGGMLAWWLTEVMVIW. Residues 263-280 lie on the Periplasmic side of the membrane; it reads SEGVVNELAGLYNSNFRL. Residues 281–301 form a helical membrane-spanning segment; that stretch reads VGMGAVDGINLILLGALLGLI. Residues 302 to 317 are Cytoplasmic-facing; that stretch reads ASWFSVHRHIRDIEPS.

Belongs to the ABC-4 integral membrane protein family. FtsX subfamily. As to quaternary structure, forms a membrane-associated complex with FtsE.

It is found in the cell inner membrane. Functionally, part of the ABC transporter FtsEX involved in cellular division. Encoded in an operon consisting of genes ftsY, ftsE and ftsX. This Aeromonas hydrophila protein is Cell division protein FtsX.